The sequence spans 143 residues: Protein Wnt-1 (143 aa).

A lipid anchor (O-palmitoleoyl serine; by PORCN) is attached at Ser-1. The tract at residues 38 to 81 is disordered; it reads EGVRGNSNRGDRGDRRDRGDRSDNGGTEANFQPYNSNHKPPGPR. Basic and acidic residues predominate over residues 46 to 60; sequence RGDRGDRRDRGDRSD. Residues 64 to 75 show a composition bias toward polar residues; that stretch reads TEANFQPYNSNH. Cys-109 and Cys-124 form a disulfide bridge. 2 N-linked (GlcNAc...) asparagine glycosylation sites follow: Asn-110 and Asn-111.

This sequence belongs to the Wnt family. Palmitoleoylation is required for efficient binding to frizzled receptors. Palmitoleoylation is necessary for proper trafficking to cell surface. Depalmitoleoylated by NOTUM, leading to inhibit Wnt signaling pathway.

It is found in the secreted. It localises to the extracellular space. Its subcellular location is the extracellular matrix. Functionally, ligand for members of the frizzled family of seven transmembrane receptors. Probable developmental protein. The chain is Protein Wnt-1 (WNT-1) from Evasterias troschelii (Mottled sea star).